The sequence spans 238 residues: Small ribosomal subunit protein eS4 (238 aa).

Residues L38–A101 form the S4 RNA-binding domain.

It belongs to the eukaryotic ribosomal protein eS4 family.

This Pyrobaculum aerophilum (strain ATCC 51768 / DSM 7523 / JCM 9630 / CIP 104966 / NBRC 100827 / IM2) protein is Small ribosomal subunit protein eS4.